The following is a 210-amino-acid chain: Dephospho-CoA kinase (210 aa).

Residues 18–210 (RIGITGGIAS…LSYPQVEVLL (193 aa)) form the DPCK domain. 26 to 31 (ASGKTS) contributes to the ATP binding site.

It belongs to the CoaE family.

It localises to the cytoplasm. The enzyme catalyses 3'-dephospho-CoA + ATP = ADP + CoA + H(+). The protein operates within cofactor biosynthesis; coenzyme A biosynthesis; CoA from (R)-pantothenate: step 5/5. Its function is as follows. Catalyzes the phosphorylation of the 3'-hydroxyl group of dephosphocoenzyme A to form coenzyme A. The chain is Dephospho-CoA kinase from Prochlorococcus marinus (strain SARG / CCMP1375 / SS120).